The following is a 304-amino-acid chain: uncharacterized protein (304 aa).

10 helical membrane passes run Thr-5–Ile-25, Phe-42–Phe-62, Ile-68–Gly-88, Ile-96–Phe-116, Leu-120–Phe-140, Thr-150–Tyr-170, Ile-178–Ile-198, Ile-215–Tyr-235, Ala-245–Gly-265, and Ile-268–Phe-288. 2 consecutive EamA domains span residues Ile-16–Phe-140 and Thr-162–Phe-288.

The protein belongs to the EamA transporter family.

It is found in the cell membrane. This is an uncharacterized protein from Buchnera aphidicola subsp. Schlechtendalia chinensis.